A 700-amino-acid chain; its full sequence is Myb-related protein B (700 aa).

HTH myb-type domains are found at residues 26-77, 78-133, and 134-184; these read RDSK…LRVL, NPDL…NPEV, and KKSC…KRKV. The segment at residues 54-77 is a DNA-binding region (H-T-H motif); it reads WKFLASHFPNRTDQQCQYRWLRVL. Lysine 104 is covalently cross-linked (Glycyl lysine isopeptide (Lys-Gly) (interchain with G-Cter in SUMO2)). 2 consecutive DNA-binding regions (H-T-H motif) follow at residues 106 to 129 and 157 to 180; these read WTLI…HNHL and WAEI…NSTI. Residues lysine 194 and lysine 197 each participate in a glycyl lysine isopeptide (Lys-Gly) (interchain with G-Cter in SUMO2) cross-link. Disordered regions lie at residues 212–287 and 391–412; these read LQSA…PETS and PISP…VLKR. Residues 213-229 are compositionally biased toward polar residues; that stretch reads QSAQPTEGQGSLLTNWP. Serine 241 bears the Phosphoserine mark. A Phosphothreonine modification is found at threonine 266. Lysine 275 participates in a covalent cross-link: Glycyl lysine isopeptide (Lys-Gly) (interchain with G-Cter in SUMO2). Serine 282 and serine 393 each carry phosphoserine. Residue lysine 411 forms a Glycyl lysine isopeptide (Lys-Gly) (interchain with G-Cter in SUMO2) linkage. The Nuclear localization signal signature appears at 411–417; that stretch reads KRQRKRR. Threonine 440 and threonine 444 each carry phosphothreonine; by CDK2. Residues lysine 447 and lysine 482 each participate in a glycyl lysine isopeptide (Lys-Gly) (interchain with G-Cter in SUMO2) cross-link. Residues threonine 487 and threonine 494 each carry the phosphothreonine; by CDK2 modification. Residue lysine 499 forms a Glycyl lysine isopeptide (Lys-Gly) (interchain with G-Cter in SUMO2) linkage. Threonine 505 carries the post-translational modification Phosphothreonine. A Glycyl lysine isopeptide (Lys-Gly) (interchain with G-Cter in SUMO2) cross-link involves residue lysine 509. Threonine 520 is subject to Phosphothreonine; by CDK2. Residues lysine 523, lysine 533, and lysine 546 each participate in a glycyl lysine isopeptide (Lys-Gly) (interchain with G-Cter in SUMO2) cross-link. Positions 564–584 match the Bipartite nuclear localization signal motif; that stretch reads RPEKQKRKPGLRRSPIKKVRK. The residue at position 577 (serine 577) is a Phosphoserine; by CDK2. Glycyl lysine isopeptide (Lys-Gly) (interchain with G-Cter in SUMO2) cross-links involve residues lysine 584, lysine 596, lysine 625, lysine 639, and lysine 648.

In terms of assembly, component of the DREAM complex (also named LINC complex) at least composed of E2F4, E2F5, LIN9, LIN37, LIN52, LIN54, MYBL1, MYBL2, RBL1, RBL2, RBBP4, TFDP1 and TFDP2. The complex exists in quiescent cells where it represses cell cycle-dependent genes. It dissociates in S phase when LIN9, LIN37, LIN52 and LIN54 form a subcomplex that binds to MYBL22. Interacts with CCNF (via the Cyclin N-terminal domain). In terms of processing, phosphorylated by cyclin A/CDK2 during S-phase. Phosphorylation at Thr-520 is probably involved in transcriptional activity.

It localises to the nucleus. Transcription factor involved in the regulation of cell survival, proliferation, and differentiation. Transactivates the expression of the CLU gene. The protein is Myb-related protein B (MYBL2) of Homo sapiens (Human).